The following is a 2194-amino-acid chain: Genome polyprotein (2194 aa).

Gly-2 is lipidated: N-myristoyl glycine; by host. At 2-1504 (GAQVSTQKTG…HVSRAFICLQ (1503 aa)) the chain is on the cytoplasmic side. The segment at 566 to 582 (LYQNDPEGALNKAVGRV) is amphipathic alpha-helix. Catalysis depends on for protease 2A activity residues His-881 and Asp-899. The Zn(2+) site is built by Cys-916 and Cys-918. The active-site For protease 2A activity is Cys-970. Zn(2+) contacts are provided by Cys-976 and His-978. Residues 1110–1182 (NNNWLKKFTE…EQSAPSQSDQ (73 aa)) form a membrane-binding region. Positions 1110–1248 (NNNWLKKFTE…SPGAGKSVAT (139 aa)) are oligomerization. Residues 1131 to 1135 (AIKIQ) form an RNA-binding region. Positions 1214–1370 (EKKMSNYIQF…SMYSQNGKIN (157 aa)) constitute an SF3 helicase domain. Zn(2+)-binding residues include Cys-1378, Cys-1390, and Cys-1395. The C4-type; degenerate zinc-finger motif lies at 1378–1395 (CDEECCPVNFKRCCPLVC). An RNA-binding region spans residues 1422–1429 (EYNHRHSV). Residues 1433–1438 (LEALFQ) form an oligomerization region. An intramembrane segment occupies 1505–1520 (ALTTFVSVAGIIYIIY). The Cytoplasmic segment spans residues 1521-2194 (KLFAGFQGAY…TLRRKWLDSF (674 aa)). Residue Tyr-1530 is modified to O-(5'-phospho-RNA)-tyrosine. The Peptidase C3 domain occupies 1550–1728 (GPAFEFAVAM…FSAALLRHYF (179 aa)). Residues His-1589, Glu-1620, and Cys-1696 each act as for protease 3C activity in the active site. The region spanning 1959 to 2075 (GHLIAFDYSG…SYPHPIDASL (117 aa)) is the RdRp catalytic domain. The Mg(2+) site is built by Asp-1965 and Asp-2061.

This sequence belongs to the picornaviruses polyprotein family. As to quaternary structure, interacts with capsid protein VP1 and capsid protein VP3 to form heterotrimeric protomers. Interacts with capsid protein VP0, and capsid protein VP3 to form heterotrimeric protomers. Five protomers subsequently associate to form pentamers which serve as building blocks for the capsid. Interacts with capsid protein VP2, capsid protein VP3 and capsid protein VP4 following cleavage of capsid protein VP0. In terms of assembly, interacts with capsid protein VP1 and capsid protein VP3 in the mature capsid. As to quaternary structure, interacts with capsid protein VP0 and capsid protein VP1 to form heterotrimeric protomers. Five protomers subsequently associate to form pentamers which serve as building blocks for the capsid. Interacts with capsid protein VP4 in the mature capsid. Interacts with protein 2C; this interaction may be important for virion morphogenesis. Interacts with capsid protein VP1 and capsid protein VP3. In terms of assembly, homodimer. As to quaternary structure, homohexamer; forms a hexameric ring structure with 6-fold symmetry characteristic of AAA+ ATPases. Interacts (via N-terminus) with host RTN3 (via reticulon domain); this interaction is important for viral replication. Interacts with capsid protein VP3; this interaction may be important for virion morphogenesis. Interacts with protein 3CD. In terms of assembly, homodimer. Interacts with host GBF1. Interacts (via GOLD domain) with host ACBD3 (via GOLD domain); this interaction allows the formation of a viral protein 3A/ACBD3 heterotetramer with a 2:2 stoichiometry, which will stimulate the recruitment of host PI4KB in order to synthesize PI4P at the viral RNA replication sites. As to quaternary structure, interacts with RNA-directed RNA polymerase. Interacts with protein 3AB and with RNA-directed RNA polymerase. In terms of assembly, interacts with Viral protein genome-linked and with protein 3CD. It depends on Mg(2+) as a cofactor. In terms of processing, specific enzymatic cleavages in vivo by the viral proteases yield processing intermediates and the mature proteins. Myristoylation is required for the formation of pentamers during virus assembly. Further assembly of 12 pentamers and a molecule of genomic RNA generates the provirion. Post-translationally, during virion maturation, immature virions are rendered infectious following cleavage of VP0 into VP4 and VP2. This maturation seems to be an autocatalytic event triggered by the presence of RNA in the capsid and it is followed by a conformational change infectious virion. In terms of processing, myristoylation is required during RNA encapsidation and formation of the mature virus particle. VPg is uridylylated by the polymerase into VPg-pUpU. This acts as a nucleotide-peptide primer for the genomic RNA replication.

The protein localises to the virion. It localises to the host cytoplasm. It is found in the host cytoplasmic vesicle membrane. Its subcellular location is the host nucleus. The enzyme catalyses a ribonucleoside 5'-triphosphate + H2O = a ribonucleoside 5'-diphosphate + phosphate + H(+). It carries out the reaction Selective cleavage of Tyr-|-Gly bond in the picornavirus polyprotein.. The catalysed reaction is RNA(n) + a ribonucleoside 5'-triphosphate = RNA(n+1) + diphosphate. It catalyses the reaction Selective cleavage of Gln-|-Gly bond in the poliovirus polyprotein. In other picornavirus reactions Glu may be substituted for Gln, and Ser or Thr for Gly.. Its activity is regulated as follows. Replication or transcription is subject to high level of random mutations by the nucleotide analog ribavirin. Its function is as follows. Forms an icosahedral capsid of pseudo T=3 symmetry with capsid proteins VP2 and VP3. The capsid is 300 Angstroms in diameter, composed of 60 copies of each capsid protein and enclosing the viral positive strand RNA genome. Capsid protein VP1 mainly forms the vertices of the capsid. Capsid protein VP1 interacts with host cell receptor to provide virion attachment to target host cells. This attachment induces virion internalization. Tyrosine kinases are probably involved in the entry process. After binding to its receptor, the capsid undergoes conformational changes. Capsid protein VP1 N-terminus (that contains an amphipathic alpha-helix) and capsid protein VP4 are externalized. Together, they shape a pore in the host membrane through which viral genome is translocated to host cell cytoplasm. In terms of biological role, forms an icosahedral capsid of pseudo T=3 symmetry with capsid proteins VP2 and VP3. The capsid is 300 Angstroms in diameter, composed of 60 copies of each capsid protein and enclosing the viral positive strand RNA genome. Lies on the inner surface of the capsid shell. After binding to the host receptor, the capsid undergoes conformational changes. Capsid protein VP4 is released, Capsid protein VP1 N-terminus is externalized, and together, they shape a pore in the host membrane through which the viral genome is translocated into the host cell cytoplasm. Functionally, component of immature procapsids, which is cleaved into capsid proteins VP4 and VP2 after maturation. Allows the capsid to remain inactive before the maturation step. Its function is as follows. Cysteine protease that cleaves viral polyprotein and specific host proteins. It is responsible for the autocatalytic cleavage between the P1 and P2 regions, which is the first cleavage occurring in the polyprotein. Also cleaves the host translation initiation factor EIF4G1, in order to shut down the capped cellular mRNA translation. Inhibits the host nucleus-cytoplasm protein and RNA trafficking by cleaving host members of the nuclear pores. Counteracts stress granule formation probably by antagonizing its assembly or promoting its dissassembly. In terms of biological role, plays an essential role in the virus replication cycle by acting as a viroporin. Creates a pore in the host endoplasmic reticulum and as a consequence releases Ca2+ in the cytoplasm of infected cell. In turn, high levels of cytoplasmic calcium may trigger membrane trafficking and transport of viral ER-associated proteins to viroplasms, sites of viral genome replication. Induces and associates with structural rearrangements of intracellular membranes. Displays RNA-binding, nucleotide binding and NTPase activities. May play a role in virion morphogenesis and viral RNA encapsidation by interacting with the capsid protein VP3. Functionally, localizes the viral replication complex to the surface of membranous vesicles. Together with protein 3CD binds the Cis-Active RNA Element (CRE) which is involved in RNA synthesis initiation. Acts as a cofactor to stimulate the activity of 3D polymerase, maybe through a nucleid acid chaperone activity. Its function is as follows. Localizes the viral replication complex to the surface of membranous vesicles. It inhibits host cell endoplasmic reticulum-to-Golgi apparatus transport and causes the disassembly of the Golgi complex, possibly through GBF1 interaction. This would result in depletion of MHC, trail receptors and IFN receptors at the host cell surface. Plays an essential role in viral RNA replication by recruiting ACBD3 and PI4KB at the viral replication sites, thereby allowing the formation of the rearranged membranous structures where viral replication takes place. In terms of biological role, acts as a primer for viral RNA replication and remains covalently bound to viral genomic RNA. VPg is uridylylated prior to priming replication into VPg-pUpU. The oriI viral genomic sequence may act as a template for this. The VPg-pUpU is then used as primer on the genomic RNA poly(A) by the RNA-dependent RNA polymerase to replicate the viral genome. During genome replication, the VPg-RNA linkage is removed by the host TDP2, thereby accelerating replication. During the late stage of the replication cycle, host TDP2 is excluded from sites of viral RNA synthesis and encapsidation, allowing for the generation of progeny virions. Involved in the viral replication complex and viral polypeptide maturation. It exhibits protease activity with a specificity and catalytic efficiency that is different from protease 3C. Protein 3CD lacks polymerase activity. Protein 3CD binds to the 5'UTR of the viral genome. Functionally, replicates the viral genomic RNA on the surface of intracellular membranes. May form linear arrays of subunits that propagate along a strong head-to-tail interaction called interface-I. Covalently attaches UMP to a tyrosine of VPg, which is used to prime RNA synthesis. The positive stranded RNA genome is first replicated at virus induced membranous vesicles, creating a dsRNA genomic replication form. This dsRNA is then used as template to synthesize positive stranded RNA genomes. ss(+)RNA genomes are either translated, replicated or encapsidated. Its function is as follows. Major viral protease that mediates proteolytic processing of the polyprotein. Cleaves host EIF5B, contributing to host translation shutoff. Also cleaves host PABPC1, contributing to host translation shutoff. Cleaves host NLRP1, triggers host N-glycine-mediated degradation of the autoinhibitory NLRP1 N-terminal fragment. The chain is Genome polyprotein from Homo sapiens (Human).